We begin with the raw amino-acid sequence, 425 residues long: Dihydroorotase (425 aa).

Residues His61 and His63 each coordinate Zn(2+). Residues 63-65 (HLR) and Asn95 each bind substrate. Residues Asp153, His180, and His233 each coordinate Zn(2+). Asn279 is a substrate binding site. Asp306 is a binding site for Zn(2+). Residue Asp306 is part of the active site. His310 is a substrate binding site.

This sequence belongs to the metallo-dependent hydrolases superfamily. DHOase family. Class I DHOase subfamily. Zn(2+) serves as cofactor.

The enzyme catalyses (S)-dihydroorotate + H2O = N-carbamoyl-L-aspartate + H(+). It participates in pyrimidine metabolism; UMP biosynthesis via de novo pathway; (S)-dihydroorotate from bicarbonate: step 3/3. In terms of biological role, catalyzes the reversible cyclization of carbamoyl aspartate to dihydroorotate. The polypeptide is Dihydroorotase (Geotalea daltonii (strain DSM 22248 / JCM 15807 / FRC-32) (Geobacter daltonii)).